Consider the following 245-residue polypeptide: Ribosomal RNA large subunit methyltransferase E (245 aa).

The S-adenosyl-L-methionine site is built by Gly83, Trp85, Asp111, Asp127, and Asp156. Lys196 acts as the Proton acceptor in catalysis.

The protein belongs to the class I-like SAM-binding methyltransferase superfamily. RNA methyltransferase RlmE family.

The protein localises to the cytoplasm. The enzyme catalyses uridine(2552) in 23S rRNA + S-adenosyl-L-methionine = 2'-O-methyluridine(2552) in 23S rRNA + S-adenosyl-L-homocysteine + H(+). Specifically methylates the uridine in position 2552 of 23S rRNA at the 2'-O position of the ribose in the fully assembled 50S ribosomal subunit. The chain is Ribosomal RNA large subunit methyltransferase E from Polaromonas naphthalenivorans (strain CJ2).